Here is a 141-residue protein sequence, read N- to C-terminus: Hemoglobin subunit alpha-D (141 aa).

Positions 1-141 constitute a Globin domain; the sequence is MLTAEDKKLI…VAAVLAEKYR (141 aa). Heme b contacts are provided by His-58 and His-87.

It belongs to the globin family. As to quaternary structure, heterotetramer of two alpha-D chains and two beta chains. As to expression, red blood cells.

Involved in oxygen transport from the lung to the various peripheral tissues. This is Hemoglobin subunit alpha-D (HBAD) from Accipiter gentilis (Northern goshawk).